The chain runs to 117 residues: UPF0125 protein VV0820 (117 aa).

A disordered region spans residues 90–117 (RKRAEQAKESGAADPVTGGKPSPLRKAD).

Belongs to the UPF0125 (RnfH) family.

This chain is UPF0125 protein VV0820, found in Vibrio vulnificus (strain YJ016).